The following is a 217-amino-acid chain: Insulin-like growth factor 2.S (217 aa).

Residues 1 to 56 form the signal peptide; the sequence is MEQLSCKHRSSSVEAEAQLCRQTESRSTQLPRMSVMRHLFLLSITFLVYTLDSAKA. A b region spans residues 57–83; the sequence is YRATETLCGGELVDTLQFVCGDRGFYF. Intrachain disulfides connect C64–C103, C76–C116, and C102–C107. Positions 84 to 96 are c; the sequence is STNNGRSNRRPNR. An a region spans residues 97–117; sequence GIVDVCCFKSCDLELLETYCA. Residues 118–123 are d; sequence KPTKNE. The propeptide at 124-217 is e peptide; sequence RDVSTAPATA…LQQASEPSHN (94 aa).

This sequence belongs to the insulin family.

The protein resides in the secreted. Functionally, the insulin-like growth factors, isolated from plasma, are structurally and functionally related to insulin but have a much higher growth-promoting activity. Promotes anterior neural development. Acts as a ligand for integrin which is required for IGF2 signaling. In Xenopus laevis (African clawed frog), this protein is Insulin-like growth factor 2.S.